The chain runs to 133 residues: Small ribosomal subunit protein uS8 (133 aa).

Residues 1 to 30 (MANHDPISDMLTRIRNASEKRHETTKVPAS) form a disordered region. Residues 16–25 (NASEKRHETT) are compositionally biased toward basic and acidic residues.

Belongs to the universal ribosomal protein uS8 family. As to quaternary structure, part of the 30S ribosomal subunit. Contacts proteins S5 and S12.

In terms of biological role, one of the primary rRNA binding proteins, it binds directly to 16S rRNA central domain where it helps coordinate assembly of the platform of the 30S subunit. In Synechococcus sp. (strain CC9902), this protein is Small ribosomal subunit protein uS8.